A 279-amino-acid polypeptide reads, in one-letter code: Putative pyruvate, phosphate dikinase regulatory protein (279 aa).

Residue 152–159 (GVSRTSKS) coordinates ADP.

It belongs to the pyruvate, phosphate/water dikinase regulatory protein family. PDRP subfamily.

It catalyses the reaction N(tele)-phospho-L-histidyl/L-threonyl-[pyruvate, phosphate dikinase] + ADP = N(tele)-phospho-L-histidyl/O-phospho-L-threonyl-[pyruvate, phosphate dikinase] + AMP + H(+). It carries out the reaction N(tele)-phospho-L-histidyl/O-phospho-L-threonyl-[pyruvate, phosphate dikinase] + phosphate + H(+) = N(tele)-phospho-L-histidyl/L-threonyl-[pyruvate, phosphate dikinase] + diphosphate. Functionally, bifunctional serine/threonine kinase and phosphorylase involved in the regulation of the pyruvate, phosphate dikinase (PPDK) by catalyzing its phosphorylation/dephosphorylation. This chain is Putative pyruvate, phosphate dikinase regulatory protein, found in Anaplasma marginale (strain Florida).